We begin with the raw amino-acid sequence, 358 residues long: Sulfoquinovosyl glycerol transport ATP-binding protein SmoE (358 aa).

The 231-residue stretch at 4–234 (VSLRKLDKSY…PESVFVGGFV (231 aa)) folds into the ABC transporter domain. An ATP-binding site is contributed by 36–43 (GPSGCGKS).

This sequence belongs to the ABC transporter superfamily. The complex is probably composed of two ATP-binding proteins (SmoE), two transmembrane proteins (SmoG and SmoH) and a solute-binding protein (SmoF).

Its subcellular location is the cell inner membrane. Its function is as follows. Part of the ABC transporter complex SmoEFGH involved in sulfoquinovosyl glycerol (SQGro) uptake. Responsible for energy coupling to the transport system. This Agrobacterium fabrum (strain C58 / ATCC 33970) (Agrobacterium tumefaciens (strain C58)) protein is Sulfoquinovosyl glycerol transport ATP-binding protein SmoE.